We begin with the raw amino-acid sequence, 357 residues long: MCRFLIFKGKQPIRLSHLLTRPAHSIINQSFDSRLRLDRRRPMNGDGFGVAYYPLDTELSEDGPCLFKAITPAWNNQNLSTLAEKTKSDLVFAHVRASTYGVLSETNCHPFTYHSLCFMHNGGISNFKGIKRKLLNHIKDEYLNFIQGSTDSECAFALFLDTLDKLGYDPKKQDGDFGNVALRKAMLRTIDYIRDWTKEANKDEAHVEPSLLNFAVTDGSTVVVSRYITSKTDEAASLHFSCGSSFVETSPGEYRVERLDRNQDVIMVASEPLTFERGDWTAVPTNSILTIKKQTILLHPIIDEYYQEDPLYLRSSTLAESKGLMGSIPLAKAVEKNVPPLEREGRTRPPTAVAHIA.

Cysteine 2 (for GATase activity) is an active-site residue. One can recognise a Glutamine amidotransferase type-2 domain in the interval 2–260 (CRFLIFKGKQ…PGEYRVERLD (259 aa)).

Belongs to the DUG3 family. In terms of assembly, component of the GSH degradosomal complex composed of at least DUG1, DUG2 and DUG3.

The protein resides in the cytoplasm. Its function is as follows. Component of the GSH degradosomal complex involved in the degradation of glutathione (GSH) and other peptides containing a gamma-glu-X bond. The protein is Probable glutamine amidotransferase DUG3 (DUG3) of Saccharomyces cerevisiae (strain ATCC 204508 / S288c) (Baker's yeast).